The following is an 82-amino-acid chain: Small ribosomal subunit protein bS16 (82 aa).

Belongs to the bacterial ribosomal protein bS16 family.

This Methylobacillus flagellatus (strain ATCC 51484 / DSM 6875 / VKM B-1610 / KT) protein is Small ribosomal subunit protein bS16.